The sequence spans 177 residues: N5-carboxyaminoimidazole ribonucleotide mutase (177 aa).

Substrate-binding residues include Ser18, Asp21, and Arg48.

The protein belongs to the AIR carboxylase family. Class I subfamily.

It catalyses the reaction 5-carboxyamino-1-(5-phospho-D-ribosyl)imidazole + H(+) = 5-amino-1-(5-phospho-D-ribosyl)imidazole-4-carboxylate. Its pathway is purine metabolism; IMP biosynthesis via de novo pathway; 5-amino-1-(5-phospho-D-ribosyl)imidazole-4-carboxylate from 5-amino-1-(5-phospho-D-ribosyl)imidazole (N5-CAIR route): step 2/2. Its function is as follows. Catalyzes the conversion of N5-carboxyaminoimidazole ribonucleotide (N5-CAIR) to 4-carboxy-5-aminoimidazole ribonucleotide (CAIR). This chain is N5-carboxyaminoimidazole ribonucleotide mutase, found in Pyrococcus horikoshii (strain ATCC 700860 / DSM 12428 / JCM 9974 / NBRC 100139 / OT-3).